A 447-amino-acid polypeptide reads, in one-letter code: Elongation factor 1-alpha (447 aa).

Positions 5–230 (KFHINIVVIG…DQINDAKRPS (226 aa)) constitute a tr-type G domain. The G1 stretch occupies residues 14–21 (GHVDSGKS). 14 to 21 (GHVDSGKS) is a binding site for GTP. N6,N6-dimethyllysine is present on Lys-55. The segment at 70-74 (GITID) is G2. N6,N6,N6-trimethyllysine is present on Lys-79. A G3 region spans residues 91–94 (DAPG). Residues 91–95 (DAPGH) and 153–156 (NKMD) each bind GTP. Residues 153 to 156 (NKMD) are G4. Lys-187 is modified (N6,N6,N6-trimethyllysine). A G5 region spans residues 194–196 (SGF). Lys-261 is subject to N6-methyllysine. The residue at position 289 (Glu-289) is a 5-glutamyl glycerylphosphorylethanolamine. Position 306 is an N6,N6,N6-trimethyllysine (Lys-306). A 5-glutamyl glycerylphosphorylethanolamine modification is found at Glu-362. Lys-396 bears the N6,N6,N6-trimethyllysine mark.

The protein belongs to the TRAFAC class translation factor GTPase superfamily. Classic translation factor GTPase family. EF-Tu/EF-1A subfamily. Was detected in all tissues examined but was most abundant in roots and salt-adapted cultured cells.

Its subcellular location is the cytoplasm. This protein promotes the GTP-dependent binding of aminoacyl-tRNA to the A-site of ribosomes during protein biosynthesis. This chain is Elongation factor 1-alpha, found in Nicotiana tabacum (Common tobacco).